An 830-amino-acid chain; its full sequence is ABC transporter G family member STR (830 aa).

Over 1-551 the chain is Cytoplasmic; sequence MAKFKRTDTN…RTTLNVIRTP (551 aa). The ABC transporter domain occupies 46-297; the sequence is LEFNNLSYSV…LAGFARPVPD (252 aa). 90–97 serves as a coordination point for ATP; it reads GPSGAGKS. 3 disordered regions span residues 333-356, 368-422, and 471-491; these read DQAA…PYAK, SHFS…SMQS, and SMSS…NKTP. Positions 368 to 378 are enriched in polar residues; the sequence is SHFSTGNMNSQ. Acidic residues predominate over residues 395–405; sequence DYEDDDDEDEF. Residues 471 to 483 show a composition bias toward low complexity; sequence SMSSSQFSMTQQT. Residues 552 to 572 traverse the membrane as a helical segment; it reads ELFLSREIVLTVMGLVLSSFF. The Extracellular segment spans residues 573–588; it reads KKLSHFDFKTINHLLN. The helical transmembrane segment at 589-609 threads the bilayer; the sequence is FYIFTICLVFFSSNDAVPTFI. Residues 610–630 are Cytoplasmic-facing; it reads QERFIFIRETSHNAYRASSYV. The helical transmembrane segment at 631-651 threads the bilayer; that stretch reads ISSLIVYLPFFAIQGFTFAGI. Topologically, residues 652–661 are extracellular; it reads TQYILHLNSS. N-linked (GlcNAc...) asparagine glycosylation is present at Asn-659. A helical transmembrane segment spans residues 662-682; that stretch reads ILSFWLILYSSLVTSNAYVML. Residues 683 to 690 are Cytoplasmic-facing; it reads VSALVPSY. A helical transmembrane segment spans residues 691–711; it reads ITGYAVVIATTALFFLTCGFF. Topologically, residues 712 to 798 are extracellular; that stretch reads LKRTQIPLVW…LFSMDIREEN (87 aa). N-linked (GlcNAc...) asparagine glycosylation is found at Asn-771 and Asn-780. Residues 799 to 819 traverse the membrane as a helical segment; that stretch reads IWLDIVILLAWGVLYRLFFYV. Topologically, residues 820–830 are cytoplasmic; the sequence is VLRFYSKNERK.

This sequence belongs to the ABC transporter superfamily. ABCG family. Stunted arbuscule (STR) subfamily. In terms of assembly, heterodimerizes with STR2; the resulting transporter is located in the peri-arbuscular membrane.

It localises to the cell membrane. In terms of biological role, together with STR2, required for arbuscule development in arbuscular mycorrhizal (AM) symbiosis. The chain is ABC transporter G family member STR from Petunia hybrida (Petunia).